A 743-amino-acid polypeptide reads, in one-letter code: Dolichyl-phosphooligosaccharide-protein glycotransferase 2 (743 aa).

Over 1-7 (MKIDKRL) the chain is Cytoplasmic. A helical membrane pass occupies residues 8–28 (MVIVAIATLFRMIPFRLKYLV). The short motif at 29 to 31 (GSD) is the DXD motif 1 element. Residues 29–91 (GSDPYFHLAY…FSFLGISLYT (63 aa)) are Extracellular-facing. Asp-31 contributes to the Mn(2+) binding site. A helical membrane pass occupies residues 92 to 112 (AFRVTPVIFGVLTVVFFYLSL). Residues 113 to 119 (KKLYNRD) are Cytoplasmic-facing. The chain crosses the membrane as a helical span at residues 120–140 (VAFIVGLFLGVNYGHIFRSMA). The Extracellular portion of the chain corresponds to 141-144 (NYYR). Mn(2+) contacts are provided by Arg-144 and Asp-146. A DXD motif 2 motif is present at residues 144–146 (RGD). Residues 145 to 165 (GDNYMLFWYSVALLGIALGLK) form a helical membrane-spanning segment. Residues 166 to 170 (TRSKY) are Cytoplasmic-facing. The next 2 helical transmembrane spans lie at 171–191 (RYLF…FWQA) and 192–212 (YYPI…YAYL). Residues 213–216 (KSPK) lie on the Cytoplasmic side of the membrane. The chain crosses the membrane as a helical span at residues 217 to 237 (LFLDSILIVLSTGLGVLIANI). Over 238-272 (LGDKVGYGMLGYTDWMGKKVAETFGLEFGFIKDAY) the chain is Extracellular. A helical membrane pass occupies residues 273-293 (LLIHVKYLLPLSLVFLGFLII). Over 294 to 302 (TKKLNPKIK) the chain is Cytoplasmic. A helical membrane pass occupies residues 303–323 (VGVLVGGSILAFIVMLVKFPA). The Extracellular portion of the chain corresponds to 324-345 (LKDLSTGFGTFREVPISETLPP). The TIXE motif motif lies at 333–336 (TFRE). Residues 346-366 (TLDDLWRAYNIAIFLAALYIL) traverse the membrane as a helical segment. Over 367 to 373 (RLRKIRS) the chain is Cytoplasmic. The chain crosses the membrane as a helical span at residues 374-391 (GDAILLGYVITSLWMLRY). Residues 392–394 (WTR) are Extracellular-facing. Position 394 (Arg-394) interacts with a glycophospholipid. The helical transmembrane segment at 395–415 (FLFTAAPAVAFLSGIGVYELT) threads the bilayer. Residues 416–424 (RRIKENKIR) are Cytoplasmic-facing. Residues 425 to 445 (ITSLGVVILLSSAFSLGEVYS) traverse the membrane as a helical segment. Over 446–743 (VKPFMNENWE…LDRGIVRVKN (298 aa)) the chain is Extracellular. Residues 474–476 (WWD) are interacts with target acceptor peptide in protein substrate. Residues 474 to 478 (WWDWG) carry the WWDYG motif motif. Positions 526 to 533 (DILKFEAI) match the DK motif motif.

The protein belongs to the STT3 family. Requires Mn(2+) as cofactor. Mg(2+) is required as a cofactor.

The protein resides in the cell membrane. It catalyses the reaction an archaeal dolichyl phosphooligosaccharide + [protein]-L-asparagine = an archaeal dolichyl phosphate + a glycoprotein with the oligosaccharide chain attached by N-beta-D-glycosyl linkage to a protein L-asparagine.. It participates in protein modification; protein glycosylation. In terms of biological role, oligosaccharyl transferase (OST) that catalyzes the initial transfer of a defined glycan (ManNAcXyl(2)GlcAMan(2)GalNAc in P.furiosus) from the lipid carrier dolichol-monophosphate to an asparagine residue within an Asn-X-Ser/Thr consensus motif in nascent polypeptide chains, the first step in protein N-glycosylation. The chain is Dolichyl-phosphooligosaccharide-protein glycotransferase 2 (aglB2) from Pyrococcus furiosus (strain ATCC 43587 / DSM 3638 / JCM 8422 / Vc1).